The sequence spans 358 residues: Serine/threonine-protein phosphatase 2A activator 2 (358 aa).

This sequence belongs to the PTPA-type PPIase family.

Its subcellular location is the cytoplasm. It catalyses the reaction [protein]-peptidylproline (omega=180) = [protein]-peptidylproline (omega=0). PPIases accelerate the folding of proteins. It catalyzes the cis-trans isomerization of proline imidic peptide bonds in oligopeptides. Acts as a regulatory subunit for PP2A-like phosphatases modulating their activity or substrate specificity, probably by inducing a conformational change in the catalytic subunit, a direct target of the PPIase. Can reactivate inactive phosphatase PP2A-phosphatase methylesterase complexes (PP2Ai) in presence of ATP and Mg(2+) by dissociating the inactive form from the complex. This Candida glabrata (strain ATCC 2001 / BCRC 20586 / JCM 3761 / NBRC 0622 / NRRL Y-65 / CBS 138) (Yeast) protein is Serine/threonine-protein phosphatase 2A activator 2 (RRD2).